The sequence spans 578 residues: NADPH oxidase 4 (578 aa).

At 1-16 (MAVSWRSWLANEGVKH) the chain is on the cytoplasmic side. Residues 17–37 (LCLFIWLSMNVLLFWKTFLLY) form a helical membrane-spanning segment. At 38-62 (NQGPEYHYLHQMLGLGLCLSRASAS) the chain is on the extracellular side. In terms of domain architecture, Ferric oxidoreductase spans 58–303 (RASASVLNLN…YCAERLYRYI (246 aa)). The chain crosses the membrane as a helical span at residues 63–83 (VLNLNCSLILLPMCRTLLAYL). Residues 84–103 (RGSQKVPSRRTRRLLDKSRT) are Cytoplasmic-facing. The chain crosses the membrane as a helical span at residues 104 to 124 (FHITCGVTICIFSGVHVAAHL). Residues 125–154 (VNALNFSVNYSEDFVELNAARYRDEDPRKL) are Extracellular-facing. An N-linked (GlcNAc...) asparagine glycan is attached at Asn133. A helical transmembrane segment spans residues 155-175 (LFTTVPGLTGVCMVVVLFLMI). The Cytoplasmic segment spans residues 176 to 188 (TASTYAIRVSNYD). Residues 189 to 209 (IFWYTHNLFFVFYMLLTLHVS) traverse the membrane as a helical segment. The Extracellular segment spans residues 210 to 424 (GGLLKYQTNL…SPFEESLNYE (215 aa)). Positions 218 to 273 (NLDTHPPGCISLNRTSSQNISLPEYFSEHFHEPFPEGFSKPEEFTQNTFVKICMEE) are E-loop; essential for H2O2 generating catalytic activity. Residue Asn230 is glycosylated (N-linked (GlcNAc...) asparagine). The interval 248 to 575 (HEPFPEGFSK…YGTRFEYNKE (328 aa)) is mediates interaction with TLR4. The 116-residue stretch at 304–419 (RSNKPVTIIS…DGPFGSPFEE (116 aa)) folds into the FAD-binding FR-type domain. The helical transmembrane segment at 425-445 (VSLCVAGGIGVTPFASILNTL) threads the bilayer. The Cytoplasmic portion of the chain corresponds to 446-578 (LDDWKPYKLR…RFEYNKESFS (133 aa)).

Interacts with, relocalizes and stabilizes CYBA/p22phox. Interacts with TLR4. Interacts with protein disulfide isomerase. Interacts with PPP1R15A. Interacts with LRRC8A; this interaction prevents the ubiquitin-mediated degradation of LRRC8A. Heme serves as cofactor. In terms of processing, N-glycosylation is required for the function.

It is found in the cytoplasm. Its subcellular location is the endoplasmic reticulum membrane. It localises to the cell membrane. The protein localises to the cell junction. The protein resides in the focal adhesion. It is found in the nucleus. It catalyses the reaction NADPH + 2 O2 = 2 superoxide + NADP(+) + H(+). The catalysed reaction is NADPH + O2 + H(+) = H2O2 + NADP(+). With respect to regulation, activated by insulin. Inhibited by diphenylene iodonium. Inhibited by plumbagin. Activated by phorbol 12-myristate 13-acetate (PMA). NADPH oxidase that catalyzes predominantly the reduction of oxygen to H2O2. Can also catalyze to a smaller extent, the reduction of oxygen to superoxide. May function as an oxygen sensor regulating the KCNK3/TASK-1 potassium channel and HIF1A activity. May regulate insulin signaling cascade. May play a role in apoptosis, bone resorption and lipolysaccharide-mediated activation of NFKB. May produce superoxide in the nucleus and play a role in regulating gene expression upon cell stimulation. Promotes ferroptosis, reactive oxygen species production and reduced glutathione (GSH) levels by activating NLRP3 inflammasome activation and cytokine release. The polypeptide is NADPH oxidase 4 (NOX4) (Pongo abelii (Sumatran orangutan)).